Here is a 331-residue protein sequence, read N- to C-terminus: Holliday junction branch migration complex subunit RuvB (331 aa).

Residues 1–178 form a large ATPase domain (RuvB-L) region; the sequence is MRNSIFEQEE…FGITLRLDFY (178 aa). ATP-binding positions include L17, R18, G59, K62, T63, T64, 125 to 127, R168, Y178, and R215; that span reads EDY. T63 contacts Mg(2+). The segment at 179 to 249 is small ATPAse domain (RuvB-S); sequence TVSELLQLLQ…FADLALNKME (71 aa). Positions 252 to 331 are head domain (RuvB-H); the sequence is QFGLDKLDYT…LSTINSARLP (80 aa). Residues R307 and R312 each coordinate DNA.

It belongs to the RuvB family. Homohexamer. Forms an RuvA(8)-RuvB(12)-Holliday junction (HJ) complex. HJ DNA is sandwiched between 2 RuvA tetramers; dsDNA enters through RuvA and exits via RuvB. An RuvB hexamer assembles on each DNA strand where it exits the tetramer. Each RuvB hexamer is contacted by two RuvA subunits (via domain III) on 2 adjacent RuvB subunits; this complex drives branch migration. In the full resolvosome a probable DNA-RuvA(4)-RuvB(12)-RuvC(2) complex forms which resolves the HJ.

It is found in the cytoplasm. The catalysed reaction is ATP + H2O = ADP + phosphate + H(+). In terms of biological role, the RuvA-RuvB-RuvC complex processes Holliday junction (HJ) DNA during genetic recombination and DNA repair, while the RuvA-RuvB complex plays an important role in the rescue of blocked DNA replication forks via replication fork reversal (RFR). RuvA specifically binds to HJ cruciform DNA, conferring on it an open structure. The RuvB hexamer acts as an ATP-dependent pump, pulling dsDNA into and through the RuvAB complex. RuvB forms 2 homohexamers on either side of HJ DNA bound by 1 or 2 RuvA tetramers; 4 subunits per hexamer contact DNA at a time. Coordinated motions by a converter formed by DNA-disengaged RuvB subunits stimulates ATP hydrolysis and nucleotide exchange. Immobilization of the converter enables RuvB to convert the ATP-contained energy into a lever motion, pulling 2 nucleotides of DNA out of the RuvA tetramer per ATP hydrolyzed, thus driving DNA branch migration. The RuvB motors rotate together with the DNA substrate, which together with the progressing nucleotide cycle form the mechanistic basis for DNA recombination by continuous HJ branch migration. Branch migration allows RuvC to scan DNA until it finds its consensus sequence, where it cleaves and resolves cruciform DNA. This chain is Holliday junction branch migration complex subunit RuvB, found in Neorickettsia sennetsu (strain ATCC VR-367 / Miyayama) (Ehrlichia sennetsu).